An 833-amino-acid polypeptide reads, in one-letter code: pre-rRNA 2'-O-ribose RNA methyltransferase (833 aa).

Residues Gly-57, Trp-59, Asp-77, Asp-93, and Asp-118 each coordinate S-adenosyl-L-methionine. The active-site Proton acceptor is Lys-158. 5 disordered regions span residues 323 to 349 (KLDN…MEEN), 363 to 453 (KKKR…DEYL), 475 to 640 (LDDV…SDED), 730 to 767 (LGKK…SGTD), and 779 to 833 (IAKK…KNKK). Positions 336 to 386 (EEKKELTAEEMEENLQEEMKEYLALVEKKKRKEKKRQNELKRKHQRKIELT) form a coiled coil. Over residues 363–381 (KKKRKEKKRQNELKRKHQR) the composition is skewed to basic residues. Residues 382 to 396 (KIELTMHIPGDKIEE) show a composition bias toward basic and acidic residues. The segment covering 423–441 (SSDEFDSDDSDDDDDDDNN) has biased composition (acidic residues). The stretch at 455-485 (QQLDEQYKLYQQRIRKKAAKLDDVKVKKDKI) forms a coiled coil. Over residues 475–486 (LDDVKVKKDKIG) the composition is skewed to basic and acidic residues. 2 stretches are compositionally biased toward acidic residues: residues 490 to 503 (YNED…EQEE) and 542 to 556 (SESE…DQDD). The span at 557–566 (ENNKPIDISK) shows a compositional bias: basic and acidic residues. Composition is skewed to acidic residues over residues 605–614 (DKDDQDDDDD) and 626–640 (PVQE…SDED). Basic and acidic residues-rich tracts occupy residues 732–741 (KKMEKTRDKA), 751–767 (SNRE…SGTD), and 794–806 (KIVD…DLRA).

The protein belongs to the class I-like SAM-binding methyltransferase superfamily. RNA methyltransferase RlmE family. SPB1 subfamily.

The protein localises to the nucleus. The protein resides in the nucleolus. It carries out the reaction a ribonucleotide in rRNA + S-adenosyl-L-methionine = a 2'-O-methylribonucleotide in rRNA + S-adenosyl-L-homocysteine + H(+). In terms of biological role, RNA 2'-O-methyltransferase involved in the maturation of rRNA and in the biogenesis of ribosomal subunits. This Dictyostelium discoideum (Social amoeba) protein is pre-rRNA 2'-O-ribose RNA methyltransferase (fsjC).